The sequence spans 497 residues: Methionine--tRNA ligase (497 aa).

The short motif at 14 to 24 (YYVNDVPHLGH) is the 'HIGH' region element. The Zn(2+) site is built by Cys129, Cys132, Cys147, and His150. A 'KMSKS' region motif is present at residues 295–299 (KMSKT). Lys298 is a binding site for ATP.

The protein belongs to the class-I aminoacyl-tRNA synthetase family. MetG type 2A subfamily. Monomer. Zn(2+) serves as cofactor.

The protein localises to the cytoplasm. The enzyme catalyses tRNA(Met) + L-methionine + ATP = L-methionyl-tRNA(Met) + AMP + diphosphate. Functionally, is required not only for elongation of protein synthesis but also for the initiation of all mRNA translation through initiator tRNA(fMet) aminoacylation. The sequence is that of Methionine--tRNA ligase (metG) from Aquifex aeolicus (strain VF5).